A 521-amino-acid polypeptide reads, in one-letter code: MTEFINRLQKVASNPNAFKKTGRGIERETLRFTPGASLSTKPHPEGVGSALTHKYITTDFAESLLEFITPVSNDVDTVLKQLEDVHHYTVSHMGDEKLWPLSMPCFVTHDDDITLAQYGESNVGKLKTTYREGLKRRYGSVMQVISGVHFNFSFSTEFWDELFGEQSEDQRKESVSDAYFALIRNYYRFGWLIPYFFGASPALCSSFIQGRETSMDFESLGKTYYLPYATSLRLSDLGYTNDAQSNLKISLNSVNEYVDGLNKAIRTPSEEFAKIGLKEGDKHIQLNSNVLQIENELYAPIRPKRVAKSGERPSEALERDGVEYIEVRSLDVNPYSPIGVNEDQVRFLDMFLTWTVLSDSAPMNDSEMACWKDNWNKIIEKGRKPGLELKIGCQGERLTQKAWAERVFEDLLIIAKEMDRVNGDDAYQQTHKRLSAMIDDPELTISGRLLAETKAAGGIGVIGCKLAVEHRETHLAHQYRFYTKQELDTEVERSVQAQKEIEANDKLSFSEYLEEYFSYLK.

This sequence belongs to the glutamate--cysteine ligase type 1 family. Type 1 subfamily.

It catalyses the reaction L-cysteine + L-glutamate + ATP = gamma-L-glutamyl-L-cysteine + ADP + phosphate + H(+). It functions in the pathway sulfur metabolism; glutathione biosynthesis; glutathione from L-cysteine and L-glutamate: step 1/2. This is Glutamate--cysteine ligase from Aliivibrio fischeri (strain MJ11) (Vibrio fischeri).